Consider the following 187-residue polypeptide: Pyridoxal 5'-phosphate synthase subunit PdxT (187 aa).

Residue 47–49 (GES) coordinates L-glutamine. Cys76 serves as the catalytic Nucleophile. Residues Arg102 and 128-129 (IR) each bind L-glutamine. Active-site charge relay system residues include His165 and Glu167.

Belongs to the glutaminase PdxT/SNO family. In terms of assembly, in the presence of PdxS, forms a dodecamer of heterodimers. Only shows activity in the heterodimer.

It carries out the reaction aldehydo-D-ribose 5-phosphate + D-glyceraldehyde 3-phosphate + L-glutamine = pyridoxal 5'-phosphate + L-glutamate + phosphate + 3 H2O + H(+). The enzyme catalyses L-glutamine + H2O = L-glutamate + NH4(+). The protein operates within cofactor biosynthesis; pyridoxal 5'-phosphate biosynthesis. Catalyzes the hydrolysis of glutamine to glutamate and ammonia as part of the biosynthesis of pyridoxal 5'-phosphate. The resulting ammonia molecule is channeled to the active site of PdxS. The protein is Pyridoxal 5'-phosphate synthase subunit PdxT of Methanococcus vannielii (strain ATCC 35089 / DSM 1224 / JCM 13029 / OCM 148 / SB).